Consider the following 607-residue polypeptide: Elongation factor 4 (607 aa).

Residues 11–193 enclose the tr-type G domain; sequence SKIRNFSIIA…QIVEKVPAPA (183 aa). GTP contacts are provided by residues 23–28 and 140–143; these read DHGKST and NKID.

This sequence belongs to the TRAFAC class translation factor GTPase superfamily. Classic translation factor GTPase family. LepA subfamily.

It is found in the cell membrane. The catalysed reaction is GTP + H2O = GDP + phosphate + H(+). Functionally, required for accurate and efficient protein synthesis under certain stress conditions. May act as a fidelity factor of the translation reaction, by catalyzing a one-codon backward translocation of tRNAs on improperly translocated ribosomes. Back-translocation proceeds from a post-translocation (POST) complex to a pre-translocation (PRE) complex, thus giving elongation factor G a second chance to translocate the tRNAs correctly. Binds to ribosomes in a GTP-dependent manner. The sequence is that of Elongation factor 4 from Bacillus cereus (strain ATCC 14579 / DSM 31 / CCUG 7414 / JCM 2152 / NBRC 15305 / NCIMB 9373 / NCTC 2599 / NRRL B-3711).